The primary structure comprises 488 residues: Palmitoyltransferase ZDHHC14 (488 aa).

The Cytoplasmic portion of the chain corresponds to 1-60 (MPPGGGGPMKDCEYSQISTHSSSPMESPHKKKKIAARRKWEVFPGRNKFFCNGRIMMARQ). A helical membrane pass occupies residues 61–81 (TGVFYLTLVLILVTSGLFFAF). The Lumenal portion of the chain corresponds to 82 to 89 (DCPYLAVK). Residues 90 to 110 (ITPAIPAVAGILFFFVMGTLL) traverse the membrane as a helical segment. Residues 111-208 (RTSFSDPGVL…GNCVGKRNYR (98 aa)) lie on the Cytoplasmic side of the membrane. Positions 165-215 (KYCFTCKIFRPPRASHCSLCDNCVERFDHHCPWVGNCVGKRNYRFFYMFIL) constitute a DHHC domain. The active-site S-palmitoyl cysteine intermediate is C195. Residues 209–229 (FFYMFILSLSFLTVFIFAFVI) form a helical membrane-spanning segment. Topologically, residues 230–255 (THVILRSQQTGFLNALKDSPASVLEA) are lumenal. Residues 256–276 (VVCFFSVWSIVGLSGFHTYLI) form a helical membrane-spanning segment. Residues 277–488 (SSNQTTNEDI…VRGLVKLSSV (212 aa)) lie on the Cytoplasmic side of the membrane. At S455 the chain carries Phosphoserine.

Belongs to the DHHC palmitoyltransferase family. ERF2/ZDHHC9 subfamily. As to expression, widely expressed.

The protein localises to the endoplasmic reticulum membrane. Its subcellular location is the golgi apparatus. The protein resides in the golgi stack membrane. The enzyme catalyses L-cysteinyl-[protein] + hexadecanoyl-CoA = S-hexadecanoyl-L-cysteinyl-[protein] + CoA. Functionally, palmitoyltransferase that could catalyze the addition of palmitate onto various protein substrates. May have a palmitoyltransferase activity toward the beta-2 adrenergic receptor/ADRB2 and thereby regulate G protein-coupled receptor signaling. May play a role in cell differentiation and apoptosis. This Homo sapiens (Human) protein is Palmitoyltransferase ZDHHC14.